An 856-amino-acid polypeptide reads, in one-letter code: DNA mismatch repair protein MutS (856 aa).

617–624 is a binding site for ATP; that stretch reads GPNMGGKS.

Belongs to the DNA mismatch repair MutS family.

Its function is as follows. This protein is involved in the repair of mismatches in DNA. It is possible that it carries out the mismatch recognition step. This protein has a weak ATPase activity. The protein is DNA mismatch repair protein MutS of Psychromonas ingrahamii (strain DSM 17664 / CCUG 51855 / 37).